The sequence spans 254 residues: Sec-independent protein translocase protein TatC (254 aa).

Helical transmembrane passes span 40 to 60 (IFLS…FVKP), 82 to 104 (FFFV…FILY), 125 to 145 (VVLG…YALI), 172 to 192 (FVLL…IQVV), 210 to 230 (FVIL…DPLT), and 233 to 253 (LLAG…RLLG).

This sequence belongs to the TatC family. Forms a complex with TatA.

Its subcellular location is the cell inner membrane. In terms of biological role, part of the twin-arginine translocation (Tat) system that transports large folded proteins containing a characteristic twin-arginine motif in their signal peptide across membranes. The chain is Sec-independent protein translocase protein TatC from Synechocystis sp. (strain ATCC 27184 / PCC 6803 / Kazusa).